The chain runs to 299 residues: Bifunctional protein FolD 2 (299 aa).

Residues 168–170, Ser-193, and Ile-234 each bind NADP(+); that span reads GRS.

The protein belongs to the tetrahydrofolate dehydrogenase/cyclohydrolase family. In terms of assembly, homodimer.

It catalyses the reaction (6R)-5,10-methylene-5,6,7,8-tetrahydrofolate + NADP(+) = (6R)-5,10-methenyltetrahydrofolate + NADPH. The enzyme catalyses (6R)-5,10-methenyltetrahydrofolate + H2O = (6R)-10-formyltetrahydrofolate + H(+). The protein operates within one-carbon metabolism; tetrahydrofolate interconversion. Catalyzes the oxidation of 5,10-methylenetetrahydrofolate to 5,10-methenyltetrahydrofolate and then the hydrolysis of 5,10-methenyltetrahydrofolate to 10-formyltetrahydrofolate. The sequence is that of Bifunctional protein FolD 2 from Rhizobium etli (strain ATCC 51251 / DSM 11541 / JCM 21823 / NBRC 15573 / CFN 42).